A 301-amino-acid chain; its full sequence is Recombination-associated protein RdgC (301 aa).

The protein belongs to the RdgC family.

The protein resides in the cytoplasm. The protein localises to the nucleoid. May be involved in recombination. The polypeptide is Recombination-associated protein RdgC (Xanthomonas oryzae pv. oryzae (strain MAFF 311018)).